The primary structure comprises 282 residues: 4-hydroxybenzoate octaprenyltransferase (282 aa).

Transmembrane regions (helical) follow at residues 17–37, 40–60, 90–110, 113–133, 135–155, 163–183, 207–227, 231–251, and 262–282; these read IGILLLWYPTAWALWMANQGF, IDLLMIFLLGTVFMRSAGCVI, AFILLFILLCASLLLLLKLPI, FYFAVISVLITFVYPFCKRFL, APQLILGLAFSMGIPMAFIAS, FVVLFLINFTWIIAYDTMYAM, LIIALLLIFLHSLWLVWAINK, WFFYLLWCTAAGILTYQLKLI, and AFLVSGYYGLVMWFAVGLALI.

The protein belongs to the UbiA prenyltransferase family. Requires Mg(2+) as cofactor.

The protein localises to the cell inner membrane. It catalyses the reaction all-trans-octaprenyl diphosphate + 4-hydroxybenzoate = 4-hydroxy-3-(all-trans-octaprenyl)benzoate + diphosphate. It participates in cofactor biosynthesis; ubiquinone biosynthesis. Functionally, catalyzes the prenylation of para-hydroxybenzoate (PHB) with an all-trans polyprenyl group. Mediates the second step in the final reaction sequence of ubiquinone-8 (UQ-8) biosynthesis, which is the condensation of the polyisoprenoid side chain with PHB, generating the first membrane-bound Q intermediate 3-octaprenyl-4-hydroxybenzoate. The polypeptide is 4-hydroxybenzoate octaprenyltransferase (Legionella pneumophila (strain Paris)).